Consider the following 187-residue polypeptide: Transmembrane protein 11-A, mitochondrial (187 aa).

The next 2 helical transmembrane spans lie at 79–95 (TAVLSGTACLLTPLALP) and 102–119 (VSLPAGVLSLACSTLYGI).

Belongs to the TMEM11 family.

The protein resides in the mitochondrion inner membrane. Its function is as follows. Plays a role in mitochondrial morphogenesis. The chain is Transmembrane protein 11-A, mitochondrial (tmem11-a) from Xenopus laevis (African clawed frog).